The primary structure comprises 273 residues: MAAQALVSSSLTSSVQTARQIFGSKPVASASQKKSSFVVKAAATPPVKQGANRPLWFASSQSLSYLDGSLPGDYGFDPLGLSDPEGTGGFIEPRWLAYGEIINGRFAMLGAAGAIAPEILGKAGLIPAETALPWFQTGVIPPAGTYTYWADNYTLFVLEMALMGFAEHRRLQDWYNPGSMGKQYFLGLEKGLAGSGNPAYPGGPFFNPLGFGKDEKSLKELKLKEVKNGRLAMLAILGYFIQGLVTGVGPYQNLLDHLADPVNNNVLTSLKFH.

The transit peptide at 1–39 (MAAQALVSSSLTSSVQTARQIFGSKPVASASQKKSSFVV) directs the protein to the chloroplast. Trp-56 contributes to the chlorophyll b binding site. The chlorophyll a site is built by Phe-76, Ser-82, and Glu-100. A chlorophyll b-binding site is contributed by Arg-105. A helical membrane pass occupies residues 106–126 (FAMLGAAGAIAPEILGKAGLI). Position 140 (Ile-140) interacts with chlorophyll b. A helical transmembrane segment spans residues 146 to 166 (YTYWADNYTLFVLEMALMGFA). Residues Glu-167 and Arg-170 each contribute to the chlorophyll b site. The residue at position 195 (Ser-195) is a Phosphoserine. Chlorophyll a is bound by residues Lys-224, Glu-225, Asn-228, Arg-230, Gln-242, and His-257. A helical membrane pass occupies residues 231 to 251 (LAMLAILGYFIQGLVTGVGPY). Residue Phe-272 participates in chlorophyll b binding.

Belongs to the light-harvesting chlorophyll a/b-binding (LHC) protein family. The LHC complex consists of chlorophyll a-b binding proteins. Red-emitting heterodimer with LHCA2. Interacts with LHCA5. Binds to carotenoids. The cofactor is Binds at least 14 chlorophylls (8 Chl-a and 6 Chl-b) and carotenoids such as lutein and neoxanthin.. Post-translationally, photoregulated by reversible phosphorylation of its threonine residues.

It localises to the plastid. It is found in the chloroplast thylakoid membrane. The light-harvesting complex (LHC) functions as a light receptor, it captures and delivers excitation energy to photosystems with which it is closely associated, here photosystem I. The protein is Photosystem I chlorophyll a/b-binding protein 3-1, chloroplastic of Arabidopsis thaliana (Mouse-ear cress).